The chain runs to 297 residues: Cyclin-dependent kinase 1 (297 aa).

Methionine 1 bears the N-acetylmethionine mark. Tyrosine 4 carries the phosphotyrosine; by PKR modification. In terms of domain architecture, Protein kinase spans 4–287 (YTKIEKIGEG…GKMALNHPYF (284 aa)). Lysine 6 and lysine 9 each carry N6-acetyllysine; alternate. Glycyl lysine isopeptide (Lys-Gly) (interchain with G-Cter in SUMO2); alternate cross-links involve residues lysine 6 and lysine 9. 10–18 (IGEGTYGVV) is a binding site for ATP. At threonine 14 the chain carries Phosphothreonine; by PKMYT1. The residue at position 15 (tyrosine 15) is a Phosphotyrosine; by PKMYT1, WEE1, WEE2 and PKC/PRKCD. Tyrosine 19 is modified (phosphotyrosine). Lysine 20 is covalently cross-linked (Glycyl lysine isopeptide (Lys-Gly) (interchain with G-Cter in SUMO2)). An ATP-binding site is contributed by lysine 33. At serine 39 the chain carries Phosphoserine. The residue at position 77 (tyrosine 77) is a Phosphotyrosine. Residue aspartate 128 is the Proton acceptor of the active site. A Glycyl lysine isopeptide (Lys-Gly) (interchain with G-Cter in SUMO2) cross-link involves residue lysine 139. Phosphothreonine is present on threonine 141. Position 161 is a phosphothreonine; by CAK (threonine 161). Serine 178 carries the phosphoserine modification. Threonine 222 is modified (phosphothreonine). The residue at position 245 (lysine 245) is an N6-succinyllysine. Serine 248 carries the post-translational modification Phosphoserine.

Belongs to the protein kinase superfamily. CMGC Ser/Thr protein kinase family. CDC2/CDKX subfamily. In terms of assembly, forms a stable but non-covalent complex with a regulatory subunit and with a cyclin. The cyclin subunit imparts substrate specificity to the complex. Interacts with cyclins-B (CCNB1, CCNB2 and CCNB3) to form a serine/threonine kinase holoenzyme complex also known as maturation promoting factor (MPF). Promotes G2-M transition when in complex with a cyclin-B. Can also form CDK1-cylin-D and CDK1-cyclin-E complexes that phosphorylate RB1 in vitro. Associates with cyclins-A and B1 during S-phase in regenerating hepatocytes. Interacts with DLGAP5. Binds to the CDK inhibitors CDKN1A/p21 and CDKN1B/p27. Interacts with catalytically active CCNB1 and RALBP1 during mitosis to form an endocytotic complex during interphase. Interacts with FANCC. Interacts with CEP63; this interaction recruits CDK1 to centrosomes. Interacts with CENPA. Interacts with NR1D1. Interacts with proteasome subunit PSMA8; to participate in meiosis progression during spermatogenesis. As to quaternary structure, unable to complex with cyclin-B1 and also fails to bind to CDKN1A/p21. (Microbial infection) Interacts with severe fever with thrombocytopenia syndrome virus (SFTSV) NSs; this interaction is inclusion body dependent, it inhibits the formation and nuclear import of the cyclin B1-CDK1 complex and leads to cell cycle arrest. Phosphorylation at Thr-161 by CAK/CDK7 activates kinase activity. Phosphorylation at Thr-14 and Tyr-15 by PKMYT1 prevents nuclear translocation. Phosphorylation at Tyr-15 by WEE1 and WEE2 inhibits the protein kinase activity and acts as a negative regulator of entry into mitosis (G2 to M transition). Phosphorylation by PKMYT1 and WEE1 takes place during mitosis to keep CDK1-cyclin-B complexes inactive until the end of G2. By the end of G2, PKMYT1 and WEE1 are inactivated, but CDC25A and CDC25B are activated. Dephosphorylation by active CDC25A and CDC25B at Thr-14 and Tyr-15, leads to CDK1 activation at the G2-M transition. Phosphorylation at Tyr-15 by WEE2 during oogenesis is required to maintain meiotic arrest in oocytes during the germinal vesicle (GV) stage, a long period of quiescence at dictyate prophase I, leading to prevent meiotic reentry. Phosphorylation by WEE2 is also required for metaphase II exit during egg activation to ensure exit from meiosis in oocytes and promote pronuclear formation. Phosphorylated at Tyr-4 by PKR/EIF2AK2 upon genotoxic stress. This phosphorylation triggers CDK1 polyubiquitination and subsequent proteolysis, thus leading to G2 arrest. In response to UV irradiation, phosphorylation at Tyr-15 by PRKCD activates the G2/M DNA damage checkpoint. In terms of processing, polyubiquitinated upon genotoxic stress. As to expression, found in breast cancer tissues.

Its subcellular location is the nucleus. The protein resides in the cytoplasm. The protein localises to the mitochondrion. It is found in the cytoskeleton. It localises to the microtubule organizing center. Its subcellular location is the centrosome. The protein resides in the spindle. The catalysed reaction is L-seryl-[protein] + ATP = O-phospho-L-seryl-[protein] + ADP + H(+). The enzyme catalyses L-threonyl-[protein] + ATP = O-phospho-L-threonyl-[protein] + ADP + H(+). It catalyses the reaction [DNA-directed RNA polymerase] + ATP = phospho-[DNA-directed RNA polymerase] + ADP + H(+). With respect to regulation, phosphorylation at Thr-14 or Tyr-15 inactivates the enzyme, while phosphorylation at Thr-161 activates it. Activated through a multistep process; binding to cyclin-B is required for relocation of cyclin-kinase complexes to the nucleus, activated by CAK/CDK7-mediated phosphorylation on Thr-161, and CDC25-mediated dephosphorylation of inhibitory phosphorylation on Thr-14 and Tyr-15. Activity is restricted during S-phase in an ATR-dependent manner to prevent premature entry into G2. Repressed by the CDK inhibitors CDKN1A/p21 and CDKN1B/p27 during the G1 phase and by CDKN1A/p21 at the G1-S checkpoint upon DNA damage. Transient activation by rapid and transient dephosphorylation at Tyr-15 triggered by TGFB1. Inhibited by flavopiridol and derivatives, pyrimidine derivatives, pyridine derivatives, purine derivatives, staurosporine, paullones, oxoindoles, indazole analogs, indolin-2-ones, pyrazolo[3,4-b]pyridines, imidazo[1,2-a]pyridine (AZ703), thiazolinone analogs(RO-3306), thiazol urea, macrocyclic quinoxalin-2-one, pyrrolo[2,3-a]carbazole, pyrazolo[1,5-a]-1,3,5-triazine, pyrazolo[1,5-a]pyrimidine (Dinaciclib, SCH 727965), 2-(1-ethyl-2-hydroxyethylamino)-6-benzylamino-9-isopropylpurine (roscovitine), olomoucine, AG-024322, AT-7519, P276-00, R547/Ro-4584820 and SNS-032/BMS-387032. Its function is as follows. Plays a key role in the control of the eukaryotic cell cycle by modulating the centrosome cycle as well as mitotic onset; promotes G2-M transition via association with multiple interphase cyclins. Phosphorylates PARVA/actopaxin, APC, AMPH, APC, BARD1, Bcl-xL/BCL2L1, BRCA2, CALD1, CASP8, CDC7, CDC20, CDC25A, CDC25C, CC2D1A, CENPA, CSNK2 proteins/CKII, FZR1/CDH1, CDK7, CEBPB, CHAMP1, DMD/dystrophin, EEF1 proteins/EF-1, EZH2, KIF11/EG5, EGFR, FANCG, FOS, GFAP, GOLGA2/GM130, GRASP1, UBE2A/hHR6A, HIST1H1 proteins/histone H1, HMGA1, HIVEP3/KRC, KAT5, LMNA, LMNB, LBR, MKI67, LATS1, MAP1B, MAP4, MARCKS, MCM2, MCM4, MKLP1, MLST8, MYB, NEFH, NFIC, NPC/nuclear pore complex, PITPNM1/NIR2, NPM1, NCL, NUCKS1, NPM1/numatrin, ORC1, PRKAR2A, EEF1E1/p18, EIF3F/p47, p53/TP53, NONO/p54NRB, PAPOLA, PLEC/plectin, RB1, TPPP, UL40/R2, RAB4A, RAP1GAP, RBBP8/CtIP, RCC1, RPS6KB1/S6K1, KHDRBS1/SAM68, ESPL1, SKI, BIRC5/survivin, STIP1, TEX14, beta-tubulins, MAPT/TAU, NEDD1, VIM/vimentin, TK1, FOXO1, RUNX1/AML1, SAMHD1, SIRT2, CGAS and RUNX2. CDK1/CDC2-cyclin-B controls pronuclear union in interphase fertilized eggs. Essential for early stages of embryonic development. During G2 and early mitosis, CDC25A/B/C-mediated dephosphorylation activates CDK1/cyclin complexes which phosphorylate several substrates that trigger at least centrosome separation, Golgi dynamics, nuclear envelope breakdown and chromosome condensation. Once chromosomes are condensed and aligned at the metaphase plate, CDK1 activity is switched off by WEE1- and PKMYT1-mediated phosphorylation to allow sister chromatid separation, chromosome decondensation, reformation of the nuclear envelope and cytokinesis. Phosphorylates KRT5 during prometaphase and metaphase. Inactivated by PKR/EIF2AK2- and WEE1-mediated phosphorylation upon DNA damage to stop cell cycle and genome replication at the G2 checkpoint thus facilitating DNA repair. Reactivated after successful DNA repair through WIP1-dependent signaling leading to CDC25A/B/C-mediated dephosphorylation and restoring cell cycle progression. Catalyzes lamin (LMNA, LMNB1 and LMNB2) phosphorylation at the onset of mitosis, promoting nuclear envelope breakdown. In proliferating cells, CDK1-mediated FOXO1 phosphorylation at the G2-M phase represses FOXO1 interaction with 14-3-3 proteins and thereby promotes FOXO1 nuclear accumulation and transcription factor activity, leading to cell death of postmitotic neurons. The phosphorylation of beta-tubulins regulates microtubule dynamics during mitosis. NEDD1 phosphorylation promotes PLK1-mediated NEDD1 phosphorylation and subsequent targeting of the gamma-tubulin ring complex (gTuRC) to the centrosome, an important step for spindle formation. In addition, CC2D1A phosphorylation regulates CC2D1A spindle pole localization and association with SCC1/RAD21 and centriole cohesion during mitosis. The phosphorylation of Bcl-xL/BCL2L1 after prolongated G2 arrest upon DNA damage triggers apoptosis. In contrast, CASP8 phosphorylation during mitosis prevents its activation by proteolysis and subsequent apoptosis. This phosphorylation occurs in cancer cell lines, as well as in primary breast tissues and lymphocytes. EZH2 phosphorylation promotes H3K27me3 maintenance and epigenetic gene silencing. CALD1 phosphorylation promotes Schwann cell migration during peripheral nerve regeneration. CDK1-cyclin-B complex phosphorylates NCKAP5L and mediates its dissociation from centrosomes during mitosis. Regulates the amplitude of the cyclic expression of the core clock gene BMAL1 by phosphorylating its transcriptional repressor NR1D1, and this phosphorylation is necessary for SCF(FBXW7)-mediated ubiquitination and proteasomal degradation of NR1D1. Phosphorylates EML3 at 'Thr-881' which is essential for its interaction with HAUS augmin-like complex and TUBG1. Phosphorylates CGAS during mitosis, leading to its inhibition, thereby preventing CGAS activation by self DNA during mitosis. Phosphorylates SKA3 on multiple sites during mitosis which promotes SKA3 binding to the NDC80 complex and anchoring of the SKA complex to kinetochores, to enable stable attachment of mitotic spindle microtubules to kinetochores. In terms of biological role, (Microbial infection) Acts as a receptor for hepatitis C virus (HCV) in hepatocytes and facilitates its cell entry. The protein is Cyclin-dependent kinase 1 (CDK1) of Homo sapiens (Human).